Consider the following 488-residue polypeptide: GTPase Der (488 aa).

EngA-type G domains lie at 3 to 166 (PVVA…AEAM) and 199 to 372 (IKLA…DSAT). Residues 9–16 (GRPNVGKS), 56–60 (DTGGI), 118–121 (NKID), 205–212 (GKPNVGKS), 252–256 (DTAGV), and 317–320 (NKWD) contribute to the GTP site. Residues 373 to 457 (RRVSTSMLTR…PIQLRFQEGD (85 aa)) enclose the KH-like domain.

This sequence belongs to the TRAFAC class TrmE-Era-EngA-EngB-Septin-like GTPase superfamily. EngA (Der) GTPase family. In terms of assembly, associates with the 50S ribosomal subunit.

Functionally, GTPase that plays an essential role in the late steps of ribosome biogenesis. This chain is GTPase Der, found in Shewanella sp. (strain MR-7).